Consider the following 242-residue polypeptide: N-alpha-acetyltransferase 60 (242 aa).

At 1–192 the chain is on the cytoplasmic side; it reads MTEVVPSSAL…GGHPPWTILD (192 aa). Residues 13-182 form the N-acetyltransferase domain; that stretch reads VSLRLLCHDD…DGFTYVLYIN (170 aa). Tyrosine 38 is a substrate binding site. Lysine 79 is modified (N6-acetyllysine; by autocatalysis). Tyrosine 97 is a catalytic residue. Position 99 (leucine 99) interacts with substrate. Residue 101 to 103 participates in acetyl-CoA binding; that stretch reads LGV. N6-acetyllysine; by autocatalysis occurs at positions 105, 109, and 121. 109-114 is a binding site for acetyl-CoA; sequence KHGIGS. Histidine 138 is a catalytic residue. Acetyl-CoA is bound by residues asparagine 143 and 150–153; that span reads YENR. An N6-acetyllysine; by autocatalysis modification is found at lysine 156. Positions 162 to 173 are required for homodimerization; that stretch reads PYYYSIRGVLKD. Tyrosine 165 lines the substrate pocket. An intramembrane region (helical) is located at residues 193 to 236; the sequence is YIQHLGSALASLSPCSIPHRVYRQAHSLLCSFLPWSGISSKSGI. At 237–242 the chain is on the cytoplasmic side; it reads EYSRTM.

Belongs to the acetyltransferase family. NAA60 subfamily. In terms of assembly, monomer and homodimer; monomer in presence of substrate and homodimer in its absence. Acetylated: autoacetylation is required for optimal acetyltransferase activity.

The protein resides in the golgi apparatus membrane. It carries out the reaction N-terminal L-methionyl-[transmembrane protein] + acetyl-CoA = N-terminal N(alpha)-acetyl-L-methionyl-[transmembrane protein] + CoA + H(+). The enzyme catalyses L-lysyl-[protein] + acetyl-CoA = N(6)-acetyl-L-lysyl-[protein] + CoA + H(+). Its function is as follows. N-alpha-acetyltransferase that specifically mediates the acetylation of N-terminal residues of the transmembrane proteins, with a strong preference for N-termini facing the cytosol. Displays N-terminal acetyltransferase activity towards a range of N-terminal sequences including those starting with Met-Lys, Met-Val, Met-Ala and Met-Met. Required for normal chromosomal segregation during anaphase. May also show histone acetyltransferase activity; such results are however unclear in vivo and would require additional experimental evidences. In Homo sapiens (Human), this protein is N-alpha-acetyltransferase 60.